The primary structure comprises 284 residues: Bifunctional protein FolD (284 aa).

NADP(+)-binding positions include 165–167 and S190; that span reads GRS.

It belongs to the tetrahydrofolate dehydrogenase/cyclohydrolase family. Homodimer.

The enzyme catalyses (6R)-5,10-methylene-5,6,7,8-tetrahydrofolate + NADP(+) = (6R)-5,10-methenyltetrahydrofolate + NADPH. It catalyses the reaction (6R)-5,10-methenyltetrahydrofolate + H2O = (6R)-10-formyltetrahydrofolate + H(+). The protein operates within one-carbon metabolism; tetrahydrofolate interconversion. Catalyzes the oxidation of 5,10-methylenetetrahydrofolate to 5,10-methenyltetrahydrofolate and then the hydrolysis of 5,10-methenyltetrahydrofolate to 10-formyltetrahydrofolate. This is Bifunctional protein FolD from Streptococcus pyogenes serotype M2 (strain MGAS10270).